The following is a 362-amino-acid chain: Transcription factor Sox-7 (362 aa).

Residues 21–41 (EDLSDGLSPHRSPREKGSETR) form a disordered region. The span at 32–41 (SPREKGSETR) shows a compositional bias: basic and acidic residues. Residues 42 to 110 (IRRPMNAFMV…QHMQDYPNYK (69 aa)) constitute a DNA-binding region (HMG box). A Sox C-terminal domain is found at 245–362 (QTGSSMIPPV…ATYYNSYSVS (118 aa)).

As to expression, expressed in the embryonic pronephric sinus as well as posterior cardinal veins.

It localises to the nucleus. Functionally, transcription factor. Binds to the DNA sequence 5'-AACAAT-3'. Acts downstream of vegt and upstream of nodal signaling to promote endodermal and mesodermal differentiation by promoting vegt-induced expression of both endodermal genes (including endodermin) and mesodermal genes (including snai1/snail and snai2/slug). Induces expression of multiple nodal genes (including nodal, nodal2, nodal4, nodal5 and nodal6) and binds directly to sites within the promoter of the nodal5 gene. The endodermal and mesodermal specification pathways then interact to initiate cardiogenesis. Acts partially redundantly with sox18 during cardiogenesis. Also acts as an antagonist of beta-catenin signaling. Regulates (possibly indirectly) development of the pronephros, the functional larval kidney. In Xenopus tropicalis (Western clawed frog), this protein is Transcription factor Sox-7.